The chain runs to 141 residues: Putative antiholin (141 aa).

Helical transmembrane passes span 4 to 24 (LSLSLMLNVSLALMLALSLIY), 32 to 52 (FVAAWAILATVICVVAGGVGV), and 94 to 114 (VVVVATFISLVAAGWIFTALI).

Interacts with holin; this interaction this interaction blocks the holin homomultimerization and delays the host cell lysis.

The protein localises to the host cell inner membrane. Involved in lysis inhibition. Interacts with and inhibits the holin thereby delaying the host cell lysis timing. The chain is Putative antiholin (lysA) from Enterobacteriaceae (Bacteriophage P2).